Here is a 254-residue protein sequence, read N- to C-terminus: Phosphoribosylaminoimidazole-succinocarboxamide synthase (254 aa).

It belongs to the SAICAR synthetase family.

The enzyme catalyses 5-amino-1-(5-phospho-D-ribosyl)imidazole-4-carboxylate + L-aspartate + ATP = (2S)-2-[5-amino-1-(5-phospho-beta-D-ribosyl)imidazole-4-carboxamido]succinate + ADP + phosphate + 2 H(+). It participates in purine metabolism; IMP biosynthesis via de novo pathway; 5-amino-1-(5-phospho-D-ribosyl)imidazole-4-carboxamide from 5-amino-1-(5-phospho-D-ribosyl)imidazole-4-carboxylate: step 1/2. This Rhodospirillum centenum (strain ATCC 51521 / SW) protein is Phosphoribosylaminoimidazole-succinocarboxamide synthase.